The chain runs to 167 residues: uncharacterized protein (167 aa).

2 consecutive DED domains span residues aspartate 2–glutamine 75 and threonine 93–valine 167.

This is an uncharacterized protein from Saimiriine herpesvirus 2 (strain 11) (SaHV-2).